The sequence spans 348 residues: Outer membrane protein A (348 aa).

An N-terminal signal peptide occupies residues 1–21 (MKKTAIAIAVALAGFATVAQA). The next 8 membrane-spanning stretches (beta stranded) occupy residues 27-37 (TWYTGAKLGWS), 55-66 (QLGAGAFGGYQV), 70-78 (VGFEMGYDW), 96-107 (QGVQLTAKLGYP), 112-120 (LDIYTRLGG), 146-155 (PVFAGGVEYA), 160-167 (IATRLEYQ), and 186-194 (LLSLGVSYR). The segment at 201 to 210 (APVVAPAPAP) is hinge-like. 3 consecutive repeat copies span residues 205 to 206 (AP), 207 to 208 (AP), and 209 to 210 (AP). The 3 X 2 AA tandem repeats of A-P stretch occupies residues 205-210 (APAPAP). The OmpA-like domain maps to 212-340 (VQTKHFTLKS…RVEIEVKGIK (129 aa)). A disulfide bond links Cys-313 and Cys-325.

The protein belongs to the outer membrane OOP (TC 1.B.6) superfamily. OmpA family. As to quaternary structure, monomer and homodimer. In terms of assembly, (Microbial infection) Upon infection with phage Sf6 associates with the mature bacteriophage capsid. Was originally suggested to be within the bacteriophage capsid. This has been disproven.

The protein resides in the extracellular vesicle. It localises to the cell outer membrane. With TolR probably plays a role in maintaining the position of the peptidoglycan cell wall in the periplasm. Acts as a porin with low permeability that allows slow penetration of small solutes; an internal gate slows down solute passage. Functionally, required for conjugation with F-type plasmids; probably serves as the mating receptor on recipient cells. In terms of biological role, (Microbial infection) Serves as a secondary receptor during phage Sf6 infection; infection requires both lipopolysaccharide (LPS) and the OmpA beta-barrel. The protein is Outer membrane protein A of Shigella flexneri.